The chain runs to 1730 residues: Meiosis regulator and mRNA stability factor 1 (1730 aa).

Position 65 is a phosphoserine (S65). In terms of domain architecture, NYN spans 352-489 (IGVFWDIENC…ALLHHANQLI (138 aa)). The span at 655 to 668 (MESKSGNRNSDHQQ) shows a compositional bias: basic and acidic residues. The tract at residues 655–722 (MESKSGNRNS…VNSPVEKKKR (68 aa)) is disordered. Position 698 is a phosphotyrosine (Y698). Positions 781–860 (VDIQVSNVDY…KKILVSLSTG (80 aa)) constitute an RRM domain. 2 HTH OST-type domains span residues 865 to 939 (SLSL…SPLG) and 993 to 1069 (SLKV…HNKP). 2 positions are modified to phosphoserine: S1081 and S1083. HTH OST-type domains lie at 1089-1163 (QLIQ…LTHR), 1165-1241 (QVKR…RKRE), 1249-1324 (RTKQ…TEVE), 1325-1400 (RFKA…INRK), 1401-1475 (SLRS…VKLT), and 1476-1550 (SLYL…LKND). Residues 1667-1714 (VQKGNLSCDSSPSSPAASPAPPGPSSEAPRPLFSKDAVESPAKKQPKN) are disordered. At S1684 the chain carries Phosphoserine.

In terms of assembly, interacts with LIMK2. In terms of tissue distribution, predominantly present in oocytes and barely detectable in granulosa cells (at protein level).

The protein resides in the peroxisome. In terms of biological role, essential regulator of oogenesis required for female meiotic progression to repress transposable elements and preventing their mobilization, which is essential for the germline integrity. Probably acts via some RNA metabolic process, equivalent to the piRNA system in males, which mediates the repression of transposable elements during meiosis by forming complexes composed of RNAs and governs the methylation and subsequent repression of transposons. Also required to protect from DNA double-strand breaks. The protein is Meiosis regulator and mRNA stability factor 1 (Marf1) of Mus musculus (Mouse).